The sequence spans 512 residues: NAD-dependent deacetylase sir2A (512 aa).

Residues 7-110 (IECIHLKDEY…EILENIKSSN (104 aa)) form a UBP-type zinc finger. Cysteine 9, histidine 11, cysteine 34, cysteine 37, cysteine 46, cysteine 49, cysteine 54, histidine 61, histidine 65, histidine 71, cysteine 84, and cysteine 87 together coordinate Zn(2+). The span at 113 to 122 (DKIVPKKDQK) shows a compositional bias: basic and acidic residues. Positions 113 to 196 (DKIVPKKDQK…DESSSEGEES (84 aa)) are disordered. Residues 130-175 (VVPSASITTSSTTTSISKQTTVNNTTTTSSSSTTTTTTTTSTTINN) are compositionally biased toward low complexity. Over residues 176–195 (NEEEEESESETDESSSEGEE) the composition is skewed to acidic residues. The Deacetylase sirtuin-type domain occupies 231–503 (CVLKKPTIEE…LDLIKLLGWE (273 aa)). Histidine 361 serves as the catalytic Proton acceptor. Residues cysteine 369, cysteine 372, cysteine 393, and cysteine 399 each coordinate Zn(2+).

It belongs to the sirtuin family. Requires Zn(2+) as cofactor.

It carries out the reaction N(6)-acetyl-L-lysyl-[protein] + NAD(+) + H2O = 2''-O-acetyl-ADP-D-ribose + nicotinamide + L-lysyl-[protein]. NAD-dependent deacetylase, which plays an important role in the regulation of transcriptional repression. This chain is NAD-dependent deacetylase sir2A (sir2A), found in Dictyostelium discoideum (Social amoeba).